A 279-amino-acid chain; its full sequence is tRNA pseudouridine synthase B (279 aa).

The Nucleophile role is filled by Asp38.

The protein belongs to the pseudouridine synthase TruB family. Type 1 subfamily.

The enzyme catalyses uridine(55) in tRNA = pseudouridine(55) in tRNA. Responsible for synthesis of pseudouridine from uracil-55 in the psi GC loop of transfer RNAs. The polypeptide is tRNA pseudouridine synthase B (Acholeplasma laidlawii (strain PG-8A)).